Reading from the N-terminus, the 255-residue chain is Hydroxyacylglutathione hydrolase (255 aa).

The Zn(2+) site is built by His55, His57, Asp59, His60, His112, Asp129, and His167.

Belongs to the metallo-beta-lactamase superfamily. Glyoxalase II family. Monomer. It depends on Zn(2+) as a cofactor.

It carries out the reaction an S-(2-hydroxyacyl)glutathione + H2O = a 2-hydroxy carboxylate + glutathione + H(+). It functions in the pathway secondary metabolite metabolism; methylglyoxal degradation; (R)-lactate from methylglyoxal: step 2/2. Thiolesterase that catalyzes the hydrolysis of S-D-lactoyl-glutathione to form glutathione and D-lactic acid. This chain is Hydroxyacylglutathione hydrolase, found in Halorhodospira halophila (strain DSM 244 / SL1) (Ectothiorhodospira halophila (strain DSM 244 / SL1)).